The primary structure comprises 250 residues: Osmotin-like protein OSML15 (250 aa).

The signal sequence occupies residues 1-21 (MSHLTTCLVFFLLAFVTYTNA). Cystine bridges form between C31-C226, C73-C83, C88-C94, C142-C214, C147-C197, C155-C165, C169-C178, and C179-C184.

This sequence belongs to the thaumatin family.

In Solanum commersonii (Commerson's wild potato), this protein is Osmotin-like protein OSML15.